Consider the following 274-residue polypeptide: MAVVKCKPTSPGRRHVVKVVNSELHKGKPYRPLLTKLCKTGGRNNRGCITTRHIGGGHKQHYRLIDFKRNKDGISALVERLEYDPCRSANVALLLYSDGERRYILAPKDLKKGDKVQSGVDVAIKAGNTLPMSNIPIGSTVHNVEMKPGKGAQIARSAGSYVQIIAREGFYVTLRLRSGEIRKIHSDCRATLGEVGNAEHMLRVLGKAGAKRWRGIRPTVRGTAMNPVDHPHGGGEGRNFGKHPVTPWGVQTKGKKTRNNKRTDKSIVRRRSKK.

Positions 221–274 (RGTAMNPVDHPHGGGEGRNFGKHPVTPWGVQTKGKKTRNNKRTDKSIVRRRSKK) are disordered.

Belongs to the universal ribosomal protein uL2 family. In terms of assembly, part of the 50S ribosomal subunit. Forms a bridge to the 30S subunit in the 70S ribosome.

Its function is as follows. One of the primary rRNA binding proteins. Required for association of the 30S and 50S subunits to form the 70S ribosome, for tRNA binding and peptide bond formation. It has been suggested to have peptidyltransferase activity; this is somewhat controversial. Makes several contacts with the 16S rRNA in the 70S ribosome. The polypeptide is Large ribosomal subunit protein uL2 (Hamiltonella defensa subsp. Acyrthosiphon pisum (strain 5AT)).